The chain runs to 332 residues: uncharacterized protein (332 aa).

The tract at residues 306 to 332 (EKNTSEVTEPKTGPSGTKDNYHLHSIF) is disordered.

This is an uncharacterized protein from Homo sapiens (Human).